We begin with the raw amino-acid sequence, 310 residues long: Haloalkane dehalogenase (310 aa).

In terms of domain architecture, AB hydrolase-1 spans 30 to 140; that stretch reads PVVLFLHGNP…PMPTWQDFHH (111 aa). Aspartate 103 serves as the catalytic Nucleophile. Glutamate 127 functions as the Proton donor in the catalytic mechanism. Histidine 280 (proton acceptor) is an active-site residue.

This sequence belongs to the haloalkane dehalogenase family. Type 2 subfamily. Monomer.

The enzyme catalyses 1-haloalkane + H2O = a halide anion + a primary alcohol + H(+). Functionally, catalyzes hydrolytic cleavage of carbon-halogen bonds in halogenated aliphatic compounds, leading to the formation of the corresponding primary alcohols, halide ions and protons. The chain is Haloalkane dehalogenase from Bradyrhizobium diazoefficiens (strain JCM 10833 / BCRC 13528 / IAM 13628 / NBRC 14792 / USDA 110).